We begin with the raw amino-acid sequence, 417 residues long: Riboflavin biosynthesis protein RibBA (417 aa).

Residues methionine 1–lysine 204 are DHBP synthase. D-ribulose 5-phosphate contacts are provided by residues arginine 28 to glutamate 29, aspartate 33, arginine 141 to threonine 145, and glutamate 165. Residue glutamate 29 coordinates Mg(2+). Histidine 144 is a Mg(2+) binding site. Positions histidine 205–leucine 417 are GTP cyclohydrolase II. Arginine 259–glutamate 263 is a binding site for GTP. The Zn(2+) site is built by cysteine 264, cysteine 275, and cysteine 277. GTP is bound by residues glutamine 280, glutamate 303–arginine 305, and threonine 325. Aspartate 337 (proton acceptor; for GTP cyclohydrolase activity) is an active-site residue. The Nucleophile; for GTP cyclohydrolase activity role is filled by arginine 339. Positions 360 and 365 each coordinate GTP.

The protein in the N-terminal section; belongs to the DHBP synthase family. In the C-terminal section; belongs to the GTP cyclohydrolase II family. Mg(2+) is required as a cofactor. The cofactor is Mn(2+). It depends on Zn(2+) as a cofactor.

It carries out the reaction D-ribulose 5-phosphate = (2S)-2-hydroxy-3-oxobutyl phosphate + formate + H(+). The enzyme catalyses GTP + 4 H2O = 2,5-diamino-6-hydroxy-4-(5-phosphoribosylamino)-pyrimidine + formate + 2 phosphate + 3 H(+). Its pathway is cofactor biosynthesis; riboflavin biosynthesis; 2-hydroxy-3-oxobutyl phosphate from D-ribulose 5-phosphate: step 1/1. It participates in cofactor biosynthesis; riboflavin biosynthesis; 5-amino-6-(D-ribitylamino)uracil from GTP: step 1/4. Its function is as follows. Catalyzes the conversion of D-ribulose 5-phosphate to formate and 3,4-dihydroxy-2-butanone 4-phosphate. Functionally, catalyzes the conversion of GTP to 2,5-diamino-6-ribosylamino-4(3H)-pyrimidinone 5'-phosphate (DARP), formate and pyrophosphate. The polypeptide is Riboflavin biosynthesis protein RibBA (Rhodococcus jostii (strain RHA1)).